The sequence spans 102 residues: Integration host factor subunit alpha (102 aa).

This sequence belongs to the bacterial histone-like protein family. Heterodimer of an alpha and a beta chain.

Its function is as follows. This protein is one of the two subunits of integration host factor, a specific DNA-binding protein that functions in genetic recombination as well as in transcriptional and translational control. This is Integration host factor subunit alpha from Albidiferax ferrireducens (strain ATCC BAA-621 / DSM 15236 / T118) (Rhodoferax ferrireducens).